The sequence spans 280 residues: Protoheme IX farnesyltransferase 2 (280 aa).

9 consecutive transmembrane segments (helical) span residues 12–32 (VIWLLILASVAGYIYGGGGVD), 35–55 (LFSLLAVAFLSTGGSAAFNHY), 76–96 (LITPNAALAYSLALSATGISL), 98–118 (FLLLGLLPGLFVLLGWLFYAV), 129–149 (WLNIFGGGFAGNAVFLGGYAL), 158–178 (AVLISFAIYLWTPSHIWALAF), 199–221 (ERAVAVISAINAAAAAYILWLYL), 226–248 (GAGGAIVALGVAATIATSIYAAV), and 255–275 (MWKMYKASSPMLTLFLIALMI).

This sequence belongs to the UbiA prenyltransferase family. Protoheme IX farnesyltransferase subfamily.

The protein localises to the cell membrane. It carries out the reaction heme b + (2E,6E)-farnesyl diphosphate + H2O = Fe(II)-heme o + diphosphate. It participates in porphyrin-containing compound metabolism; heme O biosynthesis; heme O from protoheme: step 1/1. In terms of biological role, converts heme B (protoheme IX) to heme O by substitution of the vinyl group on carbon 2 of heme B porphyrin ring with a hydroxyethyl farnesyl side group. The chain is Protoheme IX farnesyltransferase 2 from Pyrobaculum aerophilum (strain ATCC 51768 / DSM 7523 / JCM 9630 / CIP 104966 / NBRC 100827 / IM2).